A 356-amino-acid polypeptide reads, in one-letter code: sn-glycerol-3-phosphate import ATP-binding protein UgpC (356 aa).

Residues 4–235 (LKLQAVTKSW…PASRFVASFI (232 aa)) enclose the ABC transporter domain. 37–44 (GPSGCGKS) is a binding site for ATP.

The protein belongs to the ABC transporter superfamily. sn-glycerol-3-phosphate importer (TC 3.A.1.1.3) family. The complex is composed of two ATP-binding proteins (UgpC), two transmembrane proteins (UgpA and UgpE) and a solute-binding protein (UgpB).

The protein localises to the cell inner membrane. It carries out the reaction sn-glycerol 3-phosphate(out) + ATP + H2O = sn-glycerol 3-phosphate(in) + ADP + phosphate + H(+). Functionally, part of the ABC transporter complex UgpBAEC involved in sn-glycerol-3-phosphate (G3P) import. Responsible for energy coupling to the transport system. The sequence is that of sn-glycerol-3-phosphate import ATP-binding protein UgpC from Salmonella typhi.